The primary structure comprises 137 residues: Glutamate mutase sigma subunit (137 aa).

The B12-binding domain occupies 3 to 137 (KKTIVLGVIG…ADLKEDLNIK (135 aa)). Adenosylcob(III)alamin is bound by residues 13–17 (SDCHA), His-16, 61–63 (SSL), and 93–97 (NIVVG).

It belongs to the methylaspartate mutase GlmS subunit family. Heterotetramer composed of 2 epsilon subunits (GlmE) and 2 sigma subunits (GlmS). GlmE exists as a homodimer and GlmS as a monomer. It depends on adenosylcob(III)alamin as a cofactor.

The catalysed reaction is (2S,3S)-3-methyl-L-aspartate = L-glutamate. It functions in the pathway amino-acid degradation; L-glutamate degradation via mesaconate pathway; acetate and pyruvate from L-glutamate: step 1/4. Its function is as follows. Catalyzes the carbon skeleton rearrangement of L-glutamate to L-threo-3-methylaspartate ((2S,3S)-3-methylaspartate). This is Glutamate mutase sigma subunit from Clostridium tetani (strain Massachusetts / E88).